The primary structure comprises 417 residues: Carboxypeptidase B (417 aa).

An N-terminal signal peptide occupies residues methionine 1–histidine 16. Positions histidine 17–arginine 110 are cleaved as a propeptide — activation peptide. The Peptidase M14 domain maps to lysine 118–valine 412. Cysteine 173 and cysteine 186 are disulfide-bonded. Residues histidine 176 and glutamate 179 each coordinate Zn(2+). Substrate-binding positions include histidine 176–glutamate 179, arginine 234, and asparagine 251–arginine 252. 2 disulfides stabilise this stretch: cysteine 245–cysteine 268 and cysteine 259–cysteine 273. Histidine 304 provides a ligand contact to Zn(2+). Residues serine 305 to tyrosine 306 and tyrosine 356 each bind substrate. Catalysis depends on glutamate 378, which acts as the Proton donor/acceptor.

The protein belongs to the peptidase M14 family. Zn(2+) is required as a cofactor.

The protein resides in the secreted. It is found in the zymogen granule lumen. The catalysed reaction is Preferential release of a C-terminal lysine or arginine amino acid.. The polypeptide is Carboxypeptidase B (CPB1) (Bos taurus (Bovine)).